The sequence spans 255 residues: 5'-nucleotidase SurE (255 aa).

Residues aspartate 8, aspartate 9, serine 39, and asparagine 95 each contribute to the a divalent metal cation site.

It belongs to the SurE nucleotidase family. A divalent metal cation serves as cofactor.

The protein resides in the cytoplasm. The enzyme catalyses a ribonucleoside 5'-phosphate + H2O = a ribonucleoside + phosphate. Functionally, nucleotidase that shows phosphatase activity on nucleoside 5'-monophosphates. In Herpetosiphon aurantiacus (strain ATCC 23779 / DSM 785 / 114-95), this protein is 5'-nucleotidase SurE.